Here is a 284-residue protein sequence, read N- to C-terminus: Avenin-like b3 (284 aa).

The first 18 residues, 1–18, serve as a signal peptide directing secretion; the sequence is MKVFILALLALTATTAIA.

Belongs to the prolamin family. Contains disulfide bonds.

Functionally, seed storage protein. Might be integrated via inter-chain disulfide bonds within the glutenin polymer. The chain is Avenin-like b3 from Triticum aestivum (Wheat).